Here is a 289-residue protein sequence, read N- to C-terminus: ATP synthase gamma chain (289 aa).

This sequence belongs to the ATPase gamma chain family. F-type ATPases have 2 components, CF(1) - the catalytic core - and CF(0) - the membrane proton channel. CF(1) has five subunits: alpha(3), beta(3), gamma(1), delta(1), epsilon(1). CF(0) has three main subunits: a, b and c.

It is found in the cell inner membrane. Functionally, produces ATP from ADP in the presence of a proton gradient across the membrane. The gamma chain is believed to be important in regulating ATPase activity and the flow of protons through the CF(0) complex. The sequence is that of ATP synthase gamma chain from Leptospira biflexa serovar Patoc (strain Patoc 1 / ATCC 23582 / Paris).